The primary structure comprises 96 residues: uncharacterized protein (96 aa).

A helical membrane pass occupies residues 1 to 21 (MSDFEIIVGISSLLQVIILNI).

It is found in the membrane. This is an uncharacterized protein from Saccharomyces cerevisiae (strain ATCC 204508 / S288c) (Baker's yeast).